The sequence spans 469 residues: 2-amino-4-ketopentanoate thiolase beta subunit (469 aa).

An N6-(pyridoxal phosphate)lysine modification is found at lysine 102. Residues asparagine 128 and 238-242 (AGGGN) each bind pyridoxal 5'-phosphate.

The protein belongs to the threonine synthase family. Heterodimer with OrtA. Pyridoxal 5'-phosphate serves as cofactor.

It catalyses the reaction D-alanine + acetyl-CoA = (2R)-2-amino-4-oxopentanoate + CoA. Completely inhibited by p-chloromercuribenzoate (p-ClHgBzO) and acetyl-CoA, and partially inhibited by N-ethylmaleimide. In terms of biological role, involved in the ornithine fermentation pathway. Catalyzes the thiolytic cleavage of 2-amino-4-ketopentanoate (AKP) with coenzyme A (CoA) to form acetyl-CoA and alanine. It is strictly specific for AKP. This Acetoanaerobium sticklandii (strain ATCC 12662 / DSM 519 / JCM 1433 / CCUG 9281 / NCIMB 10654 / HF) (Clostridium sticklandii) protein is 2-amino-4-ketopentanoate thiolase beta subunit.